We begin with the raw amino-acid sequence, 241 residues long: Chloride intracellular channel protein 1 (241 aa).

Ala-2 bears the N-acetylalanine mark. A required for insertion into the membrane region spans residues 2-90; the sequence is AEEQPQVELF…EEFLEAVLCP (89 aa). Position 13 is an N6-acetyllysine (Lys-13). Residues 24-27 carry the G-site motif; that stretch reads CPFS. Cysteines 24 and 59 form a disulfide. A helical transmembrane segment spans residues 26–46; sequence FSQRLFMVLWLKGVTFNVTTV. The GST C-terminal domain maps to 93 to 233; that stretch reads YPKLAALNPE…PDDEEIELAY (141 aa). Lys-119 is modified (N6-acetyllysine). Ser-121 bears the Phosphoserine mark. At Lys-131 the chain carries N6-acetyllysine. A phosphoserine mark is found at Ser-156 and Ser-211. Position 233 is a phosphotyrosine (Tyr-233).

It belongs to the chloride channel CLIC family. Monomer. Homodimer (in vitro). Interacts with TRAPPC2. Dimerization requires a conformation change that leads to the exposure of a large hydrophobic surface. In vivo, this may lead to membrane insertion.

It is found in the nucleus. The protein localises to the nucleus membrane. It localises to the cytoplasm. Its subcellular location is the cell membrane. The protein resides in the endoplasmic reticulum. The enzyme catalyses L-dehydroascorbate + 2 glutathione = glutathione disulfide + L-ascorbate. The catalysed reaction is chloride(in) = chloride(out). It catalyses the reaction iodide(out) = iodide(in). It carries out the reaction thiocyanate(in) = thiocyanate(out). The enzyme catalyses nitrate(in) = nitrate(out). The catalysed reaction is bromide(in) = bromide(out). It catalyses the reaction fluoride(in) = fluoride(out). Its function is as follows. In the soluble state, catalyzes glutaredoxin-like thiol disulfide exchange reactions with reduced glutathione as electron donor. Reduces selenite and dehydroascorbate and may act as an antioxidant during oxidative stress response. Can insert into membranes and form voltage-dependent multi-ion conductive channels. Membrane insertion seems to be redox-regulated and may occur only under oxidizing conditions. Involved in regulation of the cell cycle. This is Chloride intracellular channel protein 1 (CLIC1) from Oryctolagus cuniculus (Rabbit).